Consider the following 526-residue polypeptide: MFS-type transporter clz19 (526 aa).

Positions 1–49 are disordered; sequence MNVDTTSPQAPLAGVESKQDGASNEATAKAESTTHDQNESSSFDERPVH. The span at 32-49 shows a compositional bias: basic and acidic residues; it reads STTHDQNESSSFDERPVH. An N-linked (GlcNAc...) asparagine glycan is attached at Asn38. Residues 59–79 traverse the membrane as a helical segment; the sequence is ALLAVASFAAAISPASTTTYY. N-linked (GlcNAc...) asparagine glycosylation is present at Asn97. 3 helical membrane-spanning segments follow: residues 126–143, 186–206, and 214–234; these read VYLVSLSINMAANLGLAL, AYLTLGLVMGPALGPLIGGLL, and AIFWFLMILGGFFFLMVLTFF. N-linked (GlcNAc...) asparagine glycans are attached at residues Asn238 and Asn253. The next 6 helical transmembrane spans lie at 294 to 314, 322 to 342, 384 to 404, 411 to 431, 446 to 466, and 473 to 493; these read FIVCMYGALLFGGYASVISIF, YGYSQVQVGLCYLPFGVGSIL, LTVSFPMIFATCGFVVAYGWL, VASVLVVVFLIANVFTGVLIA, ALGAAMNLTRCLMGAGGVAAV, and IGIGYTATATAGVWVVTLPAL.

It belongs to the major facilitator superfamily.

It is found in the membrane. Functionally, MFS-type transporter; part of the gene cluster that mediates the biosynthesis of squalestatin S1 (SQS1, also known as zaragozic acid A), a heavily oxidized fungal polyketide that offers potent cholesterol lowering activity by targeting squalene synthase (SS). This chain is MFS-type transporter clz19, found in Cochliobolus lunatus (Filamentous fungus).